Here is a 289-residue protein sequence, read N- to C-terminus: MSFKDRLFICSQYLLPHHLLSRLIGFAADCRATWFKDRLIAWFARRYQVDMREAQVEDLQAYEHFNAFFTRALKDGARPLAQEPGAVLCPADGAISQLGPIEHGRIFQAKGHSYSLAELLGGDAELAAPFMGGDFATVYLSPRDYHRVHMPLAGTLREMVYVPGRLFSVNQTTAENVPELFARNERVVCLFDTERGPMAVVLVGAMIVASIETVWAGLVTPPKRELKTFRYDEAARAPIRLEKGAELGRFKLGSTAIVLFGPQQVAFNDGLGAASPVRMGECLALPKQS.

Active-site charge relay system; for autoendoproteolytic cleavage activity residues include Asp92, His149, and Ser254. Ser254 (schiff-base intermediate with substrate; via pyruvic acid; for decarboxylase activity) is an active-site residue. Ser254 is modified (pyruvic acid (Ser); by autocatalysis).

This sequence belongs to the phosphatidylserine decarboxylase family. PSD-B subfamily. Prokaryotic type I sub-subfamily. Heterodimer of a large membrane-associated beta subunit and a small pyruvoyl-containing alpha subunit. Pyruvate serves as cofactor. Is synthesized initially as an inactive proenzyme. Formation of the active enzyme involves a self-maturation process in which the active site pyruvoyl group is generated from an internal serine residue via an autocatalytic post-translational modification. Two non-identical subunits are generated from the proenzyme in this reaction, and the pyruvate is formed at the N-terminus of the alpha chain, which is derived from the carboxyl end of the proenzyme. The autoendoproteolytic cleavage occurs by a canonical serine protease mechanism, in which the side chain hydroxyl group of the serine supplies its oxygen atom to form the C-terminus of the beta chain, while the remainder of the serine residue undergoes an oxidative deamination to produce ammonia and the pyruvoyl prosthetic group on the alpha chain. During this reaction, the Ser that is part of the protease active site of the proenzyme becomes the pyruvoyl prosthetic group, which constitutes an essential element of the active site of the mature decarboxylase.

The protein localises to the cell membrane. It carries out the reaction a 1,2-diacyl-sn-glycero-3-phospho-L-serine + H(+) = a 1,2-diacyl-sn-glycero-3-phosphoethanolamine + CO2. The protein operates within phospholipid metabolism; phosphatidylethanolamine biosynthesis; phosphatidylethanolamine from CDP-diacylglycerol: step 2/2. Its function is as follows. Catalyzes the formation of phosphatidylethanolamine (PtdEtn) from phosphatidylserine (PtdSer). The protein is Phosphatidylserine decarboxylase proenzyme of Pseudomonas aeruginosa (strain LESB58).